The sequence spans 103 residues: MQPNDITFFQRFQDDILAGRKTITIRDESESHFKTGDVLRVGRFEDDGYFCTIEVTATSTVTLDTLTEKHAKQENMTLTELKKVIADIYPDQTQFYVIEFKCL.

Residues 6-101 (ITFFQRFQDD…QTQFYVIEFK (96 aa)) form the ASCH domain. Lys21 serves as the catalytic Proton acceptor. The Nucleophile role is filled by Thr24. Residue Glu74 is the Proton donor of the active site.

It belongs to the N(4)-acetylcytidine amidohydrolase family.

The catalysed reaction is N(4)-acetylcytidine + H2O = cytidine + acetate + H(+). The enzyme catalyses N(4)-acetyl-2'-deoxycytidine + H2O = 2'-deoxycytidine + acetate + H(+). It carries out the reaction N(4)-acetylcytosine + H2O = cytosine + acetate + H(+). Its function is as follows. Catalyzes the hydrolysis of N(4)-acetylcytidine (ac4C). The chain is N(4)-acetylcytidine amidohydrolase (yqfB) from Escherichia coli O127:H6 (strain E2348/69 / EPEC).